Here is a 229-residue protein sequence, read N- to C-terminus: Flagellar L-ring protein (229 aa).

A signal peptide spans 1–23 (MLSRLGARVLYCLAGLALLASGG). Cys24 carries N-palmitoyl cysteine lipidation. Residue Cys24 is the site of S-diacylglycerol cysteine attachment.

Belongs to the FlgH family. As to quaternary structure, the basal body constitutes a major portion of the flagellar organelle and consists of four rings (L,P,S, and M) mounted on a central rod.

The protein resides in the cell outer membrane. The protein localises to the bacterial flagellum basal body. Functionally, assembles around the rod to form the L-ring and probably protects the motor/basal body from shearing forces during rotation. This is Flagellar L-ring protein from Cupriavidus pinatubonensis (strain JMP 134 / LMG 1197) (Cupriavidus necator (strain JMP 134)).